The chain runs to 373 residues: Dimethylallyltryptophan synthase CymD (373 aa).

D55, V56, and E64 together coordinate L-tryptophan. E64 (nucleophile) is an active-site residue. Residues Q77, K146, W148, R205, and K207 each contribute to the dimethylallyl diphosphate site. R211 provides a ligand contact to L-tryptophan. Y274 contributes to the dimethylallyl diphosphate binding site. Residue Y326 coordinates L-tryptophan. 3 residues coordinate dimethylallyl diphosphate: R337, K339, and Y341. The 28-residue stretch at 346–373 (MHDVTPPPLGVSQQHHLSGQTTARGRTE) folds into the FtsK domain.

In terms of biological role, dimethylallyltryptophan synthase; part of the gene cluster that mediates the biosynthesis of cyclic heptapeptides, known as cyclomarins and also of cyclic dipeptides, called cyclomarazines, which have both antimicrobial and cytotoxic effects. Catalyzes the reverse N-prenylation of monomeric L-tryptophan with dimethylallyl diphosphate (DMAPP) to form N-(1,1-dimethylallyl)-tryptophan (r-N-DMAT). The formation of r-N-DMAT appears to proceed via the deprotonation of the indole nitrogen of tryptophan, which facilitates a nucleophilic attack on the carbocation that is forming on the dimethylallyl group as the diphosphate dissociates. The N-(1,1-dimethylallyl)-tryptophan produced by CymD is combined with a range of standard and nonproteinogenic amino acid substrates to synthesize the peptides, a process that is probably catalyzed by the non-canonical nonribosomal peptide synthetase (NRPS), CymA. Other proteins in the cluster catalyze further modifications of the peptides including CymV which catalyzes the oxidation of olefinic cyclomarins and cyclomarazines to their respective epoxide derivatives. Utilizes only DMAPP as the prenyl donor and has no requirement for divalent cations. The protein is Dimethylallyltryptophan synthase CymD of Salinispora arenicola (strain CNS-205).